Consider the following 450-residue polypeptide: Flavin-containing monooxygenase FMO GS-OX-like 5 (450 aa).

17 to 22 contacts FAD; sequence GAGPAG. 215–220 serves as a coordination point for NADP(+); that stretch reads GNSSSA.

This sequence belongs to the FMO family. FAD is required as a cofactor.

Catalyzes the conversion of methylthioalkyl glucosinolates of any chain length into methylsulfinylalkyl glucosinolates. The chain is Flavin-containing monooxygenase FMO GS-OX-like 5 from Arabidopsis thaliana (Mouse-ear cress).